Consider the following 231-residue polypeptide: tRNA (guanine-N(1)-)-methyltransferase (231 aa).

Residues glycine 111 and 131–136 each bind S-adenosyl-L-methionine; that span reads LGNYVL.

The protein belongs to the RNA methyltransferase TrmD family. In terms of assembly, homodimer.

It is found in the cytoplasm. The catalysed reaction is guanosine(37) in tRNA + S-adenosyl-L-methionine = N(1)-methylguanosine(37) in tRNA + S-adenosyl-L-homocysteine + H(+). In terms of biological role, specifically methylates guanosine-37 in various tRNAs. The polypeptide is tRNA (guanine-N(1)-)-methyltransferase (Leptospira interrogans serogroup Icterohaemorrhagiae serovar copenhageni (strain Fiocruz L1-130)).